The chain runs to 231 residues: Ion-translocating oxidoreductase complex subunit E (231 aa).

7 helical membrane-spanning segments follow: residues 18-38, 39-59, 69-89, 93-113, 127-147, 157-177, and 182-202; these read GLVQ…ITNA, LGLG…VSLV, IPVF…LINA, NLYL…VIIG, SAFD…VLGA, LFGG…IHVW, and PFLL…LIAL.

This sequence belongs to the NqrDE/RnfAE family. The complex is composed of six subunits: RnfA, RnfB, RnfC, RnfD, RnfE and RnfG.

The protein localises to the cell inner membrane. In terms of biological role, part of a membrane-bound complex that couples electron transfer with translocation of ions across the membrane. In Shewanella frigidimarina (strain NCIMB 400), this protein is Ion-translocating oxidoreductase complex subunit E.